Here is a 900-residue protein sequence, read N- to C-terminus: DNA mismatch repair protein MutS (900 aa).

Residue 637-644 (GPNMAGKS) coordinates ATP.

This sequence belongs to the DNA mismatch repair MutS family.

Its function is as follows. This protein is involved in the repair of mismatches in DNA. It is possible that it carries out the mismatch recognition step. This protein has a weak ATPase activity. The sequence is that of DNA mismatch repair protein MutS from Methanosarcina mazei (strain ATCC BAA-159 / DSM 3647 / Goe1 / Go1 / JCM 11833 / OCM 88) (Methanosarcina frisia).